We begin with the raw amino-acid sequence, 571 residues long: Folylpolyglutamate synthase (571 aa).

Residue G122 to S125 coordinates ATP. Mg(2+)-binding residues include S146, E215, and H243. ATP is bound by residues R363 and D385.

This sequence belongs to the folylpolyglutamate synthase family. A monovalent cation is required as a cofactor. Expressed in both shoots and roots, but expression in roots is higher compared with shoots. Distinct expression in the quiescent center (QC) region of the root tip. Also expressed in vascular tissues of the cotyledons and hypocotyls, and the first true leaves of 7 days old seedlings.

The protein resides in the plastid. It is found in the chloroplast. The enzyme catalyses (6S)-5,6,7,8-tetrahydrofolyl-(gamma-L-Glu)(n) + L-glutamate + ATP = (6S)-5,6,7,8-tetrahydrofolyl-(gamma-L-Glu)(n+1) + ADP + phosphate + H(+). It functions in the pathway cofactor biosynthesis; tetrahydrofolylpolyglutamate biosynthesis. Its function is as follows. Catalyzes conversion of folates to polyglutamate derivatives allowing concentration of folate compounds in the cell and the intracellular retention of these cofactors, which are important substrates for most of the folate-dependent enzymes that are involved in one-carbon transfer reactions involved in purine, pyrimidine and amino acid synthesis. Essential for organellar and whole-plant folate homeostasis. Required for postembryonic root development. Generates polyglutamylated folate cofactors to support C1 metabolism required for meristem maintenance and cell expansion during postembryonic root development. This Arabidopsis thaliana (Mouse-ear cress) protein is Folylpolyglutamate synthase.